Here is a 253-residue protein sequence, read N- to C-terminus: Protein C1orf43 (253 aa).

The chain crosses the membrane as a helical span at residues 11–31 (VNVVLVMAYGSLVFVLLFIFV).

The protein resides in the membrane. The protein localises to the golgi apparatus. Its subcellular location is the mitochondrion. General regulator of phagocytosis. Required to uptake Gram negative bacterium by macrophages. This chain is Protein C1orf43 (C1orf43), found in Homo sapiens (Human).